The primary structure comprises 555 residues: Potassium-transporting ATPase potassium-binding subunit (555 aa).

10 consecutive transmembrane segments (helical) span residues 2-22, 60-80, 130-150, 173-193, 246-266, 278-298, 374-394, 412-432, 483-503, and 525-545; these read IWVA…PTGI, QYAL…YFIF, IGIT…VMAF, VFLP…VPQT, MSNI…PFTY, ILFV…TTSE, AGFV…GLMV, LIAV…ALAL, LVMF…AASL, and GIFI…MLVL.

The protein belongs to the KdpA family. As to quaternary structure, the system is composed of three essential subunits: KdpA, KdpB and KdpC.

Its subcellular location is the cell membrane. Part of the high-affinity ATP-driven potassium transport (or Kdp) system, which catalyzes the hydrolysis of ATP coupled with the electrogenic transport of potassium into the cytoplasm. This subunit binds the extracellular potassium ions and delivers the ions to the membrane domain of KdpB through an intramembrane tunnel. The chain is Potassium-transporting ATPase potassium-binding subunit from Bacillus cereus (strain 03BB102).